The sequence spans 448 residues: UDP-N-acetylmuramoylalanine--D-glutamate ligase (448 aa).

ATP is bound at residue 116 to 122 (GSNAKST).

Belongs to the MurCDEF family.

The protein resides in the cytoplasm. The enzyme catalyses UDP-N-acetyl-alpha-D-muramoyl-L-alanine + D-glutamate + ATP = UDP-N-acetyl-alpha-D-muramoyl-L-alanyl-D-glutamate + ADP + phosphate + H(+). Its pathway is cell wall biogenesis; peptidoglycan biosynthesis. Functionally, cell wall formation. Catalyzes the addition of glutamate to the nucleotide precursor UDP-N-acetylmuramoyl-L-alanine (UMA). This chain is UDP-N-acetylmuramoylalanine--D-glutamate ligase, found in Pseudomonas syringae pv. syringae (strain B728a).